Reading from the N-terminus, the 313-residue chain is E3 ubiquitin-protein ligase siah2 (313 aa).

Residues 1 to 49 are disordered; sequence MSRPSSAGPCASKPCGKQKQPPPPPPHAPSLPATISGGPGASAPPAPTA. Over residues 20–29 the composition is skewed to pro residues; the sequence is QPPPPPPHAP. The RING-type zinc-finger motif lies at 69–104; it reads CPVCFDYVLPPILQCQAGHLVCNQCRQKLSCCPTCR. The tract at residues 119–311 is SBD; the sequence is VASAVLFPCK…LGINVTISTC (193 aa). Residues 122–182 form an SIAH-type zinc finger; that stretch reads AVLFPCKYAS…VMQHLTHSHK (61 aa). Zn(2+) is bound by residues Cys-127, Cys-134, His-146, Cys-150, Cys-157, Cys-164, His-176, and His-181.

This sequence belongs to the SINA (Seven in absentia) family. As to quaternary structure, homodimer. In terms of tissue distribution, widely expressed in early embryos until stage 40. It is then expressed in brain, spinal cord and in the developing and mature eye.

Its subcellular location is the cytoplasm. It catalyses the reaction S-ubiquitinyl-[E2 ubiquitin-conjugating enzyme]-L-cysteine + [acceptor protein]-L-lysine = [E2 ubiquitin-conjugating enzyme]-L-cysteine + N(6)-ubiquitinyl-[acceptor protein]-L-lysine.. Its pathway is protein modification; protein ubiquitination. In terms of biological role, E3 ubiquitin-protein ligase that mediates ubiquitination and subsequent proteasomal degradation of target proteins. E3 ubiquitin ligases accept ubiquitin from an E2 ubiquitin-conjugating enzyme in the form of a thioester and then directly transfers the ubiquitin to targeted substrates. Involved in eye morphogenesis, probably triggers the ubiquitin-mediated degradation of different substrates. May play a role in the regulation of the cellular clock function. In Xenopus laevis (African clawed frog), this protein is E3 ubiquitin-protein ligase siah2 (siah2).